The following is a 504-amino-acid chain: MTKLLEMKNITKKFGDVVALNNISISLETGEILSLCGENGSGKSTLMKVLCGIYPSGDYEGEIYFSGEKLTAKNIKDTEEKGISIIHQELTLVKNMSVLENMFLGNEITQAGITNDNKMYLRCKTLLEQVQLDIDPNTKVSALGLGQQQLVEIAKALNKQVRLLILDEPTASLTEKETDILLNLIKGLQAHNIACIYISHKLNEVKAISDKICVIRDGEHIGTQLAQGISEDDIITMMVGREITSLYPHEPHDIGKEILRVENLTAWHPTNTHIKRVDNANFILRKGEILGVAGLVGSGRTEMAQCIFGSYVGKYQGNIFLNNQKVKINKCAEAIANHIVMVPEDRKKHGIIPIMSVGKNITLSSLSQFCFGKKVINEPLEETIINQSIAKLKVKTSSPELAIGRLSGGNQQKAILAKCLLLHPNILILDEPTRGIDVGAKYEIYKLINQLAQEGMSIIVISSELPEVLGISDRVLVMHQGKVKADLINHHLTQEQVMEAALKE.

2 consecutive ABC transporter domains span residues 5 to 242 (LEMK…VGRE) and 259 to 500 (LRVE…VMEA). 37–44 (GENGSGKS) contributes to the ATP binding site.

The protein belongs to the ABC transporter superfamily. Xylose importer (TC 3.A.1.2.4) family. The complex is composed of two ATP-binding proteins (XylG), two transmembrane proteins (XylH) and a solute-binding protein (XylF).

It localises to the cell inner membrane. The catalysed reaction is D-xylose(out) + ATP + H2O = D-xylose(in) + ADP + phosphate + H(+). Functionally, part of the ABC transporter complex XylFGH involved in xylose import. Responsible for energy coupling to the transport system. This Histophilus somni (strain 129Pt) (Haemophilus somnus) protein is Xylose import ATP-binding protein XylG.